A 525-amino-acid polypeptide reads, in one-letter code: Heat shock factor protein 1 (525 aa).

Residue Met-1 is modified to N-acetylmethionine. The tract at residues 15–120 (VPAFLTKLWT…LLENIKRKVT (106 aa)) is DNA-binding domain. Lys-80 is modified (N6-acetyllysine). Lys-91 is subject to N6-acetyllysine; alternate. Lys-91 is covalently cross-linked (Glycyl lysine isopeptide (Lys-Gly) (interchain with G-Cter in SUMO2); alternate). N6-acetyllysine is present on Lys-118. Ser-121 carries the post-translational modification Phosphoserine; by MAPKAPK2. Residues Lys-126 and Lys-131 each participate in a glycyl lysine isopeptide (Lys-Gly) (interchain with G-Cter in SUMO2) cross-link. Residues 130–203 (IKIRQDSVTR…ISLVQSNRIL (74 aa)) form a hydrophobic repeat HR-A/B region. Thr-142 carries the post-translational modification Phosphothreonine; by CK2. 2 positions are modified to N6-acetyllysine: Lys-150 and Lys-188. The segment at 203 to 224 (LGVKRKIPLMLSDSNSAHSVPK) is d domain. At Lys-208 the chain carries N6-acetyllysine; alternate. Lys-208 participates in a covalent cross-link: Glycyl lysine isopeptide (Lys-Gly) (interchain with G-Cter in SUMO2); alternate. At Ser-216 the chain carries Phosphoserine; by PLK1. The regulatory domain stretch occupies residues 221 to 310 (SVPKYGRQYS…PPSPPHSPRV (90 aa)). A Glycyl lysine isopeptide (Lys-Gly) (interchain with G-Cter in SUMO2) cross-link involves residue Lys-224. Ser-230 is subject to Phosphoserine; by CAMK2A. Disordered regions lie at residues 272–327 (APTS…PLSP) and 340–365 (PTPAASNTAPMDTTGAQAPALPTPST). Residues Ser-275 and Ser-292 each carry the phosphoserine modification. Position 298 is an N6-acetyllysine; alternate (Lys-298). Lys-298 participates in a covalent cross-link: Glycyl lysine isopeptide (Lys-Gly) (interchain with G-Cter in SUMO2); alternate. A Glycyl lysine isopeptide (Lys-Gly) (interchain with G-Cter in SUMO); alternate cross-link involves residue Lys-298. Phosphoserine occurs at positions 303, 307, 314, and 319. At Ser-320 the chain carries Phosphoserine; by PKA. Position 323 is a phosphothreonine (Thr-323). Ser-326 is subject to Phosphoserine; by MAPK12. A compositionally biased stretch (polar residues) spans 343–355 (AASNTAPMDTTGA). Ser-345 carries the phosphoserine modification. The transactivation domain stretch occupies residues 367–525 (EKCLSVACLD…PHKAKDPTVS (159 aa)). The hydrophobic repeat HR-C stretch occupies residues 380–405 (LSDHLDAMDSNLDNLQTMLTSHGFSV). A 9aaTAD motif is present at residues 408 to 416 (SALLDLFSP). Position 415 is a phosphoserine; by PLK1 (Ser-415). Ser-440 is subject to Phosphoserine. Disordered regions lie at residues 441 to 460 (PQEPPRPIEAENSNPDSGKQ) and 495 to 525 (YFSEGDDYTDDPTISLLTGTEPHKAKDPTVS). Basic and acidic residues predominate over residues 515–525 (EPHKAKDPTVS). N6-acetyllysine is present on Lys-520.

Belongs to the HSF family. In terms of assembly, monomer; cytoplasmic latent and transcriptionally inactive monomeric form in unstressed cells. Homotrimer; in response to stress, such as heat shock, homotrimerizes and translocates into the nucleus, binds to heat shock element (HSE) sequences in promoter of heat shock protein (HSP) genes and acquires transcriptional ability. Interacts (via monomeric form) with FKBP4; this interaction occurs in unstressed cells. Associates (via monomeric form) with HSP90 proteins in a multichaperone complex in unnstressed cell; this association maintains HSF1 in a non-DNA-binding and transcriptional inactive form by preventing HSF1 homotrimerization. Homotrimeric transactivation activity is modulated by protein-protein interactions and post-translational modifications. Interacts with HSP90AA1; this interaction is decreased in a IER5-dependent manner, promoting HSF1 accumulation in the nucleus, homotrimerization and DNA-binding activities. Part (via regulatory domain in the homotrimeric form) of a large heat shock-induced HSP90-dependent multichaperone complex at least composed of FKBP4, FKBP5, HSP90 proteins, PPID, PPP5C and PTGES3; this association maintains the HSF1 homotrimeric DNA-bound form in a transcriptionally inactive form. Interacts with BAG3 (via BAG domain); this interaction occurs in normal and heat-shocked cells promoting nuclear shuttling of HSF1 in a BAG3-dependent manner. Interacts (via homotrimeric and hyperphosphorylated form) with FKBP4; this interaction occurs upon heat shock in a HSP90-dependent multichaperone complex. Interacts (via homotrimeric form preferentially) with EEF1A proteins. In heat shocked cells, stress-denatured proteins compete with HSF1 homotrimeric DNA-bound form for association of the HSP90-dependent multichaperone complex, and hence alleviating repression of HSF1-mediated transcriptional activity. Interacts (via homotrimeric form preferentially) with DAXX; this interaction relieves homotrimeric HSF1 from repression of its transcriptional activity by HSP90-dependent multichaperone complex upon heat shock. Interacts (via D domain and preferentially with hyperphosphorylated form) with JNK1; this interaction occurs under both normal growth conditions and immediately upon heat shock. Interacts (via D domain and preferentially with hyperphosphorylated form) with MAPK3; this interaction occurs upon heat shock. Interacts with IER5 (via central region); this interaction promotes PPP2CA-induced dephosphorylation on Ser-121, Ser-307, Ser-314 and Thr-323 and HSF1 transactivation activity. Found in a ribonucleoprotein complex composed of the HSF1 homotrimeric form, translation elongation factor eEF1A proteins and non-coding RNA heat shock RNA-1 (HSR1); this complex occurs upon heat shock and stimulates HSF1 DNA-binding activity. Interacts (via transactivation domain) with HSPA1A/HSP70 and DNAJB1; these interactions result in the inhibition of heat shock- and HSF1-induced transcriptional activity during the attenuation and recovery phase from heat shock. Interacts (via Ser-303 and Ser-307 phosphorylated form) with YWHAE; this interaction promotes HSF1 sequestration in the cytoplasm in an ERK-dependent manner. Found in a complex with IER5 and PPP2CA. Interacts with TPR; this interaction increases upon heat shock and stimulates export of HSP70 mRNA. Interacts with SYMPK (via N-terminus) and CSTF2; these interactions occur upon heat shock. Interacts (via transactivation domain) with HSPA8. Interacts with EEF1D; this interaction occurs at heat shock promoter element (HSE) sequences. Interacts with MAPKAPK2. Interacts with PRKACA/PKA. Interacts (via transactivation domain) with GTF2A2. Interacts (via transactivation domain) with GTF2B. Interacts (via transactivation domain) with TBP. Interacts with CDK9, CCNT1 and EP300. Interacts (via N-terminus) with XRCC5 (via N-terminus) and XRCC6 (via N-terminus); these interactions are direct and prevent XRCC5/XRCC6 heterodimeric binding and non-homologous end joining (NHEJ) repair activities induced by ionizing radiation (IR). Interacts with PLK1; this interaction occurs during the early mitotic period, increases upon heat shock but does not modulate neither HSF1 homotrimerization and DNA-binding activities. Interacts (via Ser-216 phosphorylated form) with CDC20; this interaction occurs in mitosis in a MAD2L1-dependent manner and prevents PLK1-stimulated degradation of HSF1 by blocking the recruitment of the SCF(BTRC) ubiquitin ligase complex. Interacts with MAD2L1; this interaction occurs in mitosis. Interacts with BTRC; this interaction occurs during mitosis, induces its ubiquitin-dependent degradation following stimulus-dependent phosphorylation at Ser-216, a process inhibited by CDC20. Interacts with HSP90AA1 and HSP90AB1. Forms a complex with TTC5/STRAP and p300/EP300; these interactions augment chromatin-bound HSF1 and p300/EP300 histone acetyltransferase activity. In terms of processing, phosphorylated. Phosphorylated in unstressed cells; this phosphorylation is constitutive and implicated in the repression of HSF1 transcriptional activity. Phosphorylated on Ser-121 by MAPKAPK2; this phosphorylation promotes interaction with HSP90 proteins and inhibits HSF1 homotrimerization, DNA-binding and transactivation activities. Phosphorylation on Ser-303 by GSK3B/GSK3-beat and on Ser-307 by MAPK3 within the regulatory domain is involved in the repression of HSF1 transcriptional activity and occurs in a RAF1-dependent manner. Phosphorylation on Ser-303 and Ser-307 increases HSF1 nuclear export in a YWHAE- and XPO1/CRM1-dependent manner. Phosphorylation on Ser-307 is a prerequisite for phosphorylation on Ser-303. According to, Ser-303 is not phosphorylated in unstressed cells. Phosphorylated on Ser-415 by PLK1; phosphorylation promotes nuclear translocation upon heat shock. Hyperphosphorylated upon heat shock and during the attenuation and recovery phase period of the heat shock response. Phosphorylated on Thr-142; this phosphorylation increases HSF1 transactivation activity upon heat shock. Phosphorylation on Ser-230 by CAMK2A; this phosphorylation enhances HSF1 transactivation activity upon heat shock. Phosphorylation on Ser-326 by MAPK12; this phosphorylation enhances HSF1 nuclear translocation, homotrimerization and transactivation activities upon heat shock. Phosphorylated on Ser-320 by PRKACA/PKA; this phosphorylation promotes nuclear localization and transcriptional activity upon heat shock. Phosphorylated by MAPK8; this phosphorylation occurs upon heat shock, induces HSF1 translocation into nuclear stress bodies and negatively regulates transactivation activity. Neither basal nor stress-inducible phosphorylation on Ser-230, Ser-292, Ser-303, Ser-307, Ser-314, Ser-319, Ser-320, Thr-323, Ser-326, Ser-338, Ser-345, Ser-364 and Thr-365 within the regulatory domain is involved in the regulation of HSF1 subcellular localization or DNA-binding activity; however, it negatively regulates HSF1 transactivation activity. Phosphorylated on Ser-216 by PLK1 in the early mitotic period; this phosphorylation regulates HSF1 localization to the spindle pole, the recruitment of the SCF(BTRC) ubiquitin ligase complex inducing HSF1 degradation, and hence mitotic progression. Dephosphorylated on Ser-121, Ser-307, Ser-314 and Thr-323 by phosphatase PPP2CA in an IER5-dependent manner, leading to HSF1-mediated transactivation activity. Sumoylated with SUMO1 and SUMO2 upon heat shock in a ERK2-dependent manner. Sumoylated by SUMO1 on Lys-298; sumoylation occurs upon heat shock and promotes its localization to nuclear stress bodies and DNA-binding activity. Phosphorylation on Ser-303 and Ser-307 is probably a prerequisite for sumoylation. Post-translationally, acetylated on Lys-118; this acetylation is decreased in a IER5-dependent manner. Acetylated on Lys-118, Lys-208 and Lys-298; these acetylations occur in a EP300-dependent manner. Acetylated on Lys-80; this acetylation inhibits DNA-binding activity upon heat shock. Deacetylated on Lys-80 by SIRT1; this deacetylation increases DNA-binding activity. In terms of processing, ubiquitinated by SCF(BTRC) and degraded following stimulus-dependent phosphorylation at Ser-216 by PLK1 in mitosis. Polyubiquitinated. Undergoes proteasomal degradation upon heat shock and during the attenuation and recovery phase period of the heat shock response.

It localises to the nucleus. The protein resides in the cytoplasm. It is found in the nucleoplasm. Its subcellular location is the perinuclear region. The protein localises to the cytoskeleton. It localises to the spindle pole. The protein resides in the microtubule organizing center. It is found in the centrosome. Its subcellular location is the chromosome. The protein localises to the centromere. It localises to the kinetochore. Functions as a stress-inducible and DNA-binding transcription factor that plays a central role in the transcriptional activation of the heat shock response (HSR), leading to the expression of a large class of molecular chaperones, heat shock proteins (HSPs), that protect cells from cellular insult damage. In unstressed cells, is present in a HSP90-containing multichaperone complex that maintains it in a non-DNA-binding inactivated monomeric form. Upon exposure to heat and other stress stimuli, undergoes homotrimerization and activates HSP gene transcription through binding to site-specific heat shock elements (HSEs) present in the promoter regions of HSP genes. Upon heat shock stress, forms a chromatin-associated complex with TTC5/STRAP and p300/EP300 to stimulate HSR transcription, therefore increasing cell survival. Activation is reversible, and during the attenuation and recovery phase period of the HSR, returns to its unactivated form. Binds to inverted 5'-NGAAN-3' pentamer DNA sequences. Binds to chromatin at heat shock gene promoters. Activates transcription of transcription factor FOXR1 which in turn activates transcription of the heat shock chaperones HSPA1A and HSPA6 and the antioxidant NADPH-dependent reductase DHRS2. Binds the promoter region upstream of exon 1 of Mpv17l to activate expression of the M-LPS isoform which is involved in metabolism of reactive oxygen species. Also serves several other functions independently of its transcriptional activity. Involved in the repression of Ras-induced transcriptional activation of the c-fos gene in heat-stressed cells. Positively regulates pre-mRNA 3'-end processing and polyadenylation of HSP70 mRNA upon heat-stressed cells in a symplekin (SYMPK)-dependent manner. Plays a role in nuclear export of stress-induced HSP70 mRNA. Plays a role in the regulation of mitotic progression. Also plays a role as a negative regulator of non-homologous end joining (NHEJ) repair activity in a DNA damage-dependent manner. Involved in stress-induced cancer cell proliferation in a IER5-dependent manner. The protein is Heat shock factor protein 1 of Mus musculus (Mouse).